Reading from the N-terminus, the 178-residue chain is Probable chorismate pyruvate-lyase (178 aa).

Substrate contacts are provided by Arg73, Leu111, and Glu163.

This sequence belongs to the UbiC family.

It is found in the cytoplasm. It catalyses the reaction chorismate = 4-hydroxybenzoate + pyruvate. Its pathway is cofactor biosynthesis; ubiquinone biosynthesis. Removes the pyruvyl group from chorismate, with concomitant aromatization of the ring, to provide 4-hydroxybenzoate (4HB) for the ubiquinone pathway. In Pseudomonas aeruginosa (strain UCBPP-PA14), this protein is Probable chorismate pyruvate-lyase.